Reading from the N-terminus, the 108-residue chain is UPF0145 protein sll118 (108 aa).

Belongs to the UPF0145 family.

In Synechocystis sp. (strain ATCC 27184 / PCC 6803 / Kazusa), this protein is UPF0145 protein sll118.